A 569-amino-acid polypeptide reads, in one-letter code: Arginine--tRNA ligase (569 aa).

Positions 123–133 (ANPNGPLHVGH) match the 'HIGH' region motif.

It belongs to the class-I aminoacyl-tRNA synthetase family.

The protein resides in the cytoplasm. It catalyses the reaction tRNA(Arg) + L-arginine + ATP = L-arginyl-tRNA(Arg) + AMP + diphosphate. The polypeptide is Arginine--tRNA ligase (Methanosarcina mazei (strain ATCC BAA-159 / DSM 3647 / Goe1 / Go1 / JCM 11833 / OCM 88) (Methanosarcina frisia)).